The sequence spans 297 residues: MNLGSLVSESRNPQTMDLDALSTFDLVTRFNQQDTLVALAVKETLPEVAKAVDAATDALKSGGRIIYMGAGTSGRLGVLDASECPPTFGVPHGLVLGLIAGGPGALLKAVEGAEDNQQLGADDLIAIHLTANDLVVGLAASGRTPYVIGGLEYAKQLGCTTVAISCNPVSPIAQVAAIAISPVVGPEALTGSTRLKSGTAQKLVLNMISTGAMVKFGKVYQNLMVDMQATNIKLVDRACRMVVQATGASREEAEAALKQTDHDVKPAILMILSGLDAAAARAKLDAHQGFLRAALEN.

Residues A55–K218 enclose the SIS domain. The active-site Proton donor is the E83. E114 is an active-site residue.

It belongs to the GCKR-like family. MurNAc-6-P etherase subfamily. As to quaternary structure, homodimer.

It carries out the reaction N-acetyl-D-muramate 6-phosphate + H2O = N-acetyl-D-glucosamine 6-phosphate + (R)-lactate. The protein operates within amino-sugar metabolism; 1,6-anhydro-N-acetylmuramate degradation. Its pathway is amino-sugar metabolism; N-acetylmuramate degradation. It functions in the pathway cell wall biogenesis; peptidoglycan recycling. Functionally, specifically catalyzes the cleavage of the D-lactyl ether substituent of MurNAc 6-phosphate, producing GlcNAc 6-phosphate and D-lactate. Together with AnmK, is also required for the utilization of anhydro-N-acetylmuramic acid (anhMurNAc) either imported from the medium or derived from its own cell wall murein, and thus plays a role in cell wall recycling. This is N-acetylmuramic acid 6-phosphate etherase from Enterobacter sp. (strain 638).